Reading from the N-terminus, the 555-residue chain is Pentatricopeptide repeat-containing protein At2g44880 (555 aa).

PPR repeat units follow at residues 41-75 (DSFL…TCFA), 77-111 (DNFT…GFCA), 112-142 (DMYV…MPHR), 143-173 (SEVS…MPHV), 175-205 (DVVI…MTHK), 206-240 (TVIT…NLVS), 241-267 (WNTM…MQAT), 273-307 (DDVT…KLDK), 308-342 (KVKV…QVAS), 343-370 (WNAM…MIEE), 373-407 (DEIT…GLNA), and 408-438 (KIEH…MPFE). Residues 443 to 518 (ILSSFLSACG…EVGCSLIEIN (76 aa)) are type E motif. The tract at residues 519 to 549 (YIVSEFISGDTTHPHRRSIHLVLGDLLMHMN) is type E(+) motif.

This sequence belongs to the PPR family. PCMP-E subfamily.

The chain is Pentatricopeptide repeat-containing protein At2g44880 (PCMP-E9) from Arabidopsis thaliana (Mouse-ear cress).